A 587-amino-acid chain; its full sequence is Nucleoporin ndc-1 (587 aa).

Residues 1–79 are Cytoplasmic-facing; that stretch reads MMGENSSAYT…FHSEIDVRKK (79 aa). The interval 32–55 is disordered; sequence ASTSATSSPNLRKSPNRGFSSPRA. A helical transmembrane segment spans residues 80 to 100; it reads LASFVCGAAVALSFIVTVSIL. Residues 101–121 lie on the Perinuclear space side of the membrane; that stretch reads KLSIWAPFSSVQDSLTWWLYP. Residues 122 to 142 traverse the membrane as a helical segment; that stretch reads TSWPVTLFIWLSSVAWTFLII. The Cytoplasmic segment spans residues 143–161; it reads HQFCTVTQVPRIPITDTYA. Residues 162–182 form a helical membrane-spanning segment; that stretch reads WAGAALEFVHRLIFVYTAFTV. Residues 183–187 lie on the Perinuclear space side of the membrane; that stretch reads SESSF. Residues 188–208 form a helical membrane-spanning segment; the sequence is FEDFAWIAIAFSVAISSALVI. Over 209-255 the chain is Cytoplasmic; that stretch reads FRSDFHLNFSNVQVNSFKTLIDFAKSLPYGSLAETSGVDAAIAYTAA. Residues 256 to 276 form a helical membrane-spanning segment; sequence MALTVFGSPLLWGFSAWWLLI. The Perinuclear space portion of the chain corresponds to 277–281; sequence NIQFH. A helical membrane pass occupies residues 282–302; sequence LVLFGVCFAQQFFAKIFMKIV. At 303–587 the chain is on the cytoplasmic side; the sequence is NQIVMKPMKF…TIKLVCAEEI (285 aa).

The protein belongs to the NDC1 family.

It is found in the nucleus. It localises to the nuclear pore complex. The protein localises to the nucleus membrane. Component of the nuclear pore complex (NPC), which plays a key role in de novo assembly and insertion of NPC in the nuclear envelope. This Caenorhabditis briggsae protein is Nucleoporin ndc-1 (npp-22).